A 514-amino-acid polypeptide reads, in one-letter code: Type-2 serine--tRNA ligase (514 aa).

Ala313 contacts L-serine. Cys315 serves as a coordination point for Zn(2+). Arg344 is a binding site for L-serine. Residues 344-346 and 355-356 contribute to the ATP site; these read RWE and RV. 361-363 provides a ligand contact to L-serine; it reads RGE. Residues Glu363 and Cys470 each contribute to the Zn(2+) site. Arg477 contributes to the ATP binding site.

The protein belongs to the class-II aminoacyl-tRNA synthetase family. Type-2 seryl-tRNA synthetase subfamily. Homodimer. Zn(2+) is required as a cofactor.

The protein resides in the cytoplasm. It catalyses the reaction tRNA(Ser) + L-serine + ATP = L-seryl-tRNA(Ser) + AMP + diphosphate + H(+). The catalysed reaction is tRNA(Sec) + L-serine + ATP = L-seryl-tRNA(Sec) + AMP + diphosphate + H(+). The protein operates within aminoacyl-tRNA biosynthesis; selenocysteinyl-tRNA(Sec) biosynthesis; L-seryl-tRNA(Sec) from L-serine and tRNA(Sec): step 1/1. Functionally, catalyzes the attachment of serine to tRNA(Ser). Is also able to aminoacylate tRNA(Sec) with serine, to form the misacylated tRNA L-seryl-tRNA(Sec), which will be further converted into selenocysteinyl-tRNA(Sec). In Methanococcus maripaludis (strain C6 / ATCC BAA-1332), this protein is Type-2 serine--tRNA ligase.